Reading from the N-terminus, the 210-residue chain is Thiamine-phosphate synthase 2 (210 aa).

4-amino-2-methyl-5-(diphosphooxymethyl)pyrimidine contacts are provided by residues 38–42 (QLREK) and aspartate 70. Mg(2+)-binding residues include aspartate 71 and glutamate 90. 4-amino-2-methyl-5-(diphosphooxymethyl)pyrimidine is bound at residue threonine 109. Residue 135-137 (TTT) participates in 2-[(2R,5Z)-2-carboxy-4-methylthiazol-5(2H)-ylidene]ethyl phosphate binding. Lysine 138 provides a ligand contact to 4-amino-2-methyl-5-(diphosphooxymethyl)pyrimidine. Glycine 165 is a 2-[(2R,5Z)-2-carboxy-4-methylthiazol-5(2H)-ylidene]ethyl phosphate binding site.

Belongs to the thiamine-phosphate synthase family. Mg(2+) is required as a cofactor.

It catalyses the reaction 2-[(2R,5Z)-2-carboxy-4-methylthiazol-5(2H)-ylidene]ethyl phosphate + 4-amino-2-methyl-5-(diphosphooxymethyl)pyrimidine + 2 H(+) = thiamine phosphate + CO2 + diphosphate. The enzyme catalyses 2-(2-carboxy-4-methylthiazol-5-yl)ethyl phosphate + 4-amino-2-methyl-5-(diphosphooxymethyl)pyrimidine + 2 H(+) = thiamine phosphate + CO2 + diphosphate. The catalysed reaction is 4-methyl-5-(2-phosphooxyethyl)-thiazole + 4-amino-2-methyl-5-(diphosphooxymethyl)pyrimidine + H(+) = thiamine phosphate + diphosphate. Its pathway is cofactor biosynthesis; thiamine diphosphate biosynthesis; thiamine phosphate from 4-amino-2-methyl-5-diphosphomethylpyrimidine and 4-methyl-5-(2-phosphoethyl)-thiazole: step 1/1. Its function is as follows. Condenses 4-methyl-5-(beta-hydroxyethyl)thiazole monophosphate (THZ-P) and 2-methyl-4-amino-5-hydroxymethyl pyrimidine pyrophosphate (HMP-PP) to form thiamine monophosphate (TMP). This chain is Thiamine-phosphate synthase 2, found in Streptococcus pneumoniae serotype 4 (strain ATCC BAA-334 / TIGR4).